We begin with the raw amino-acid sequence, 126 residues long: MARVTVEDCVLKVPNRFELVLIAGQRARDISAGAKLTVERDNDKNPVVALREIADDTVPLDALQNALIQNLQKHVEVDEPEEDEMEGFIADRDLAFENVANEDEMIEDGMSINDTGADFDVDSGDE.

The protein belongs to the RNA polymerase subunit omega family. As to quaternary structure, the RNAP catalytic core consists of 2 alpha, 1 beta, 1 beta' and 1 omega subunit. When a sigma factor is associated with the core the holoenzyme is formed, which can initiate transcription.

The enzyme catalyses RNA(n) + a ribonucleoside 5'-triphosphate = RNA(n+1) + diphosphate. In terms of biological role, promotes RNA polymerase assembly. Latches the N- and C-terminal regions of the beta' subunit thereby facilitating its interaction with the beta and alpha subunits. The protein is DNA-directed RNA polymerase subunit omega of Paramagnetospirillum magneticum (strain ATCC 700264 / AMB-1) (Magnetospirillum magneticum).